The chain runs to 273 residues: Diphthine methyl ester synthase (273 aa).

S-adenosyl-L-methionine-binding positions include Leu10, Asp87, Gly90, Ser115–Ile116, Leu166, Val224, and His249.

This sequence belongs to the diphthine synthase family.

It carries out the reaction 2-[(3S)-amino-3-carboxypropyl]-L-histidyl-[translation elongation factor 2] + 4 S-adenosyl-L-methionine = diphthine methyl ester-[translation elongation factor 2] + 4 S-adenosyl-L-homocysteine + 3 H(+). Its pathway is protein modification; peptidyl-diphthamide biosynthesis. S-adenosyl-L-methionine-dependent methyltransferase that catalyzes four methylations of the modified target histidine residue in translation elongation factor 2 (EF-2), to form an intermediate called diphthine methyl ester. The four successive methylation reactions represent the second step of diphthamide biosynthesis. This chain is Diphthine methyl ester synthase (dph5), found in Dictyostelium discoideum (Social amoeba).